Reading from the N-terminus, the 286-residue chain is MGIRIYKPTSAGRRNASVSDFKELTPGYTPERSLLRPKTKTGGRNNQGKITSRHRGGGHKQKYRVIDFRRVKDGVVATVDSVQYDPNRTARIALLKYPDGEKHYVIAPSGVAAGDKLQNGPDAPPVVGNCLPLKNIPLGTSVCCIEMRAGRGAVMCRSAGTQATLQAREADWAQLLLPSGEVRRVPSACRATIGQVGNSDHMNIVLGKAGRSRWLGRRPHVRGTAMNPIDHPHGGGEGRTKGGRHPVSPSGKSAKGGRTRQKRKPSNSSIVRRRKSRRYGQLKLHK.

Disordered stretches follow at residues 22 to 59 (KELT…GGGH) and 215 to 286 (LGRR…KLHK). Over residues 230-240 (DHPHGGGEGRT) the composition is skewed to basic and acidic residues. The segment covering 255 to 286 (KGGRTRQKRKPSNSSIVRRRKSRRYGQLKLHK) has biased composition (basic residues).

This sequence belongs to the universal ribosomal protein uL2 family. Part of the 50S ribosomal subunit. Forms a bridge to the 30S subunit in the 70S ribosome.

Functionally, one of the primary rRNA binding proteins. Required for association of the 30S and 50S subunits to form the 70S ribosome, for tRNA binding and peptide bond formation. It has been suggested to have peptidyltransferase activity; this is somewhat controversial. Makes several contacts with the 16S rRNA in the 70S ribosome. In Rhodopirellula baltica (strain DSM 10527 / NCIMB 13988 / SH1), this protein is Large ribosomal subunit protein uL2.